Reading from the N-terminus, the 320-residue chain is Lipoyl synthase (320 aa).

[4Fe-4S] cluster contacts are provided by Cys67, Cys72, Cys78, Cys93, Cys97, Cys100, and Ser307. The Radical SAM core domain occupies 79–296; that stretch reads FNHGTATFMI…RDKAEKMGFE (218 aa).

It belongs to the radical SAM superfamily. Lipoyl synthase family. It depends on [4Fe-4S] cluster as a cofactor.

Its subcellular location is the cytoplasm. The enzyme catalyses [[Fe-S] cluster scaffold protein carrying a second [4Fe-4S](2+) cluster] + N(6)-octanoyl-L-lysyl-[protein] + 2 oxidized [2Fe-2S]-[ferredoxin] + 2 S-adenosyl-L-methionine + 4 H(+) = [[Fe-S] cluster scaffold protein] + N(6)-[(R)-dihydrolipoyl]-L-lysyl-[protein] + 4 Fe(3+) + 2 hydrogen sulfide + 2 5'-deoxyadenosine + 2 L-methionine + 2 reduced [2Fe-2S]-[ferredoxin]. Its pathway is protein modification; protein lipoylation via endogenous pathway; protein N(6)-(lipoyl)lysine from octanoyl-[acyl-carrier-protein]: step 2/2. Functionally, catalyzes the radical-mediated insertion of two sulfur atoms into the C-6 and C-8 positions of the octanoyl moiety bound to the lipoyl domains of lipoate-dependent enzymes, thereby converting the octanoylated domains into lipoylated derivatives. The polypeptide is Lipoyl synthase (Histophilus somni (strain 129Pt) (Haemophilus somnus)).